The primary structure comprises 865 residues: Bifunctional uridylyltransferase/uridylyl-removing enzyme (865 aa).

The interval 1–318 (MPHVDLNPLK…FPRPDSDARL (318 aa)) is uridylyltransferase. Residues 319 to 675 (IDDDFRNLRE…VRPTEHGEGL (357 aa)) are uridylyl-removing. The HD domain occupies 437 to 559 (VDQHTLAVVR…VGDERRLAAL (123 aa)). 2 consecutive ACT domains span residues 676–762 (QVMV…RLPH) and 789–865 (RLSV…QQAA). The tract at residues 747-767 (DPHAARHAHAPRRLPHSHARR) is disordered. Over residues 751 to 767 (ARHAHAPRRLPHSHARR) the composition is skewed to basic residues.

Belongs to the GlnD family. Requires Mg(2+) as cofactor.

It carries out the reaction [protein-PII]-L-tyrosine + UTP = [protein-PII]-uridylyl-L-tyrosine + diphosphate. The enzyme catalyses [protein-PII]-uridylyl-L-tyrosine + H2O = [protein-PII]-L-tyrosine + UMP + H(+). Uridylyltransferase (UTase) activity is inhibited by glutamine, while glutamine activates uridylyl-removing (UR) activity. In terms of biological role, modifies, by uridylylation and deuridylylation, the PII regulatory proteins (GlnB and homologs), in response to the nitrogen status of the cell that GlnD senses through the glutamine level. Under low glutamine levels, catalyzes the conversion of the PII proteins and UTP to PII-UMP and PPi, while under higher glutamine levels, GlnD hydrolyzes PII-UMP to PII and UMP (deuridylylation). Thus, controls uridylylation state and activity of the PII proteins, and plays an important role in the regulation of nitrogen assimilation and metabolism. The sequence is that of Bifunctional uridylyltransferase/uridylyl-removing enzyme from Bordetella pertussis (strain Tohama I / ATCC BAA-589 / NCTC 13251).